A 453-amino-acid chain; its full sequence is Tubulin alpha-1/2/3 chain (453 aa).

Q11 lines the GTP pocket. Residue K40 is modified to N6-acetyllysine. E71, S140, G144, T145, T179, N206, and N228 together coordinate GTP. E71 serves as a coordination point for Mg(2+). E254 is an active-site residue. Residues 429–453 (EKDYEEVGTESQEGDGEEGEDGGDQ) form a disordered region. The segment covering 431–453 (DYEEVGTESQEGDGEEGEDGGDQ) has biased composition (acidic residues).

The protein belongs to the tubulin family. Dimer of alpha and beta chains. A typical microtubule is a hollow water-filled tube with an outer diameter of 25 nm and an inner diameter of 15 nM. Alpha-beta heterodimers associate head-to-tail to form protofilaments running lengthwise along the microtubule wall with the beta-tubulin subunit facing the microtubule plus end conferring a structural polarity. Microtubules usually have 13 protofilaments but different protofilament numbers can be found in some organisms and specialized cells. The cofactor is Mg(2+). In terms of processing, acetylation of alpha chains at Lys-40 stabilizes microtubules and affects affinity and processivity of microtubule motors. This modification has a role in multiple cellular functions, ranging from cell motility, cell cycle progression or cell differentiation to intracellular trafficking and signaling.

The protein localises to the cytoplasm. It localises to the cytoskeleton. The catalysed reaction is GTP + H2O = GDP + phosphate + H(+). Functionally, tubulin is the major constituent of microtubules, a cylinder consisting of laterally associated linear protofilaments composed of alpha- and beta-tubulin heterodimers. Microtubules grow by the addition of GTP-tubulin dimers to the microtubule end, where a stabilizing cap forms. Below the cap, tubulin dimers are in GDP-bound state, owing to GTPase activity of alpha-tubulin. The chain is Tubulin alpha-1/2/3 chain (TBA1) from Naegleria gruberi (Amoeba).